A 123-amino-acid chain; its full sequence is Large ribosomal subunit protein bL12 (123 aa).

The segment at 96-123 (NVKEGVSKEEAEGLKKSLEEAGATVELK) is disordered. Basic and acidic residues predominate over residues 100–114 (GVSKEEAEGLKKSLE).

Belongs to the bacterial ribosomal protein bL12 family. In terms of assembly, homodimer. Part of the ribosomal stalk of the 50S ribosomal subunit. Forms a multimeric L10(L12)X complex, where L10 forms an elongated spine to which 2 to 4 L12 dimers bind in a sequential fashion. Binds GTP-bound translation factors.

Forms part of the ribosomal stalk which helps the ribosome interact with GTP-bound translation factors. Is thus essential for accurate translation. This chain is Large ribosomal subunit protein bL12, found in Flavobacterium johnsoniae (strain ATCC 17061 / DSM 2064 / JCM 8514 / BCRC 14874 / CCUG 350202 / NBRC 14942 / NCIMB 11054 / UW101) (Cytophaga johnsonae).